A 65-amino-acid polypeptide reads, in one-letter code: Large ribosomal subunit protein eL24 (65 aa).

Positions 6, 9, 32, and 36 each coordinate Zn(2+). The segment at 6 to 36 (CAFCGADIPPGYGIMYVKSDGTVLRYCSRKC) adopts a C4-type zinc-finger fold.

It belongs to the eukaryotic ribosomal protein eL24 family. As to quaternary structure, part of the 50S ribosomal subunit. Forms a cluster with proteins L3 and L14. Zn(2+) is required as a cofactor.

Functionally, binds to the 23S rRNA. This Pyrobaculum arsenaticum (strain DSM 13514 / JCM 11321 / PZ6) protein is Large ribosomal subunit protein eL24.